The chain runs to 185 residues: MAAEPKESPSNNPGLHTTPDEATKGYIMQQTMFRIKDPKVSLDFYSRVLGMSLLKRLDFPEMKFSLYFMGYENTAEAPSNPIDKVVWTFSQKATIELTHNWGTESDPEFKGYHNGNSEPRGFGHIGVTVDDTYKACERFQNLGVEFVKKPEDGKMKGIAFIKDPDGYWIEIFDRKTIGNVTQTAA.

The interval 1-21 is disordered; it reads MAAEPKESPSNNPGLHTTPDE. The region spanning 27-174 is the VOC domain; the sequence is IMQQTMFRIK…DGYWIEIFDR (148 aa). Substrate-binding residues include Q30 and R34. Q30 is a Zn(2+) binding site. E96 is a Zn(2+) binding site. Residues N100, R120, H124, and 154 to 155 contribute to the substrate site; that span reads KM. Residue H124 participates in Zn(2+) binding. E170 is a binding site for Zn(2+). The active-site Proton donor/acceptor is E170.

Belongs to the glyoxalase I family. Homodimer. Requires Zn(2+) as cofactor.

The catalysed reaction is (R)-S-lactoylglutathione = methylglyoxal + glutathione. The protein operates within secondary metabolite metabolism; methylglyoxal degradation; (R)-lactate from methylglyoxal: step 1/2. Its function is as follows. Catalyzes the conversion of hemimercaptal, formed from methylglyoxal and glutathione, to S-lactoylglutathione. Active toward the hemithioacetal adducts formed by reacting methylglyoxal or phenylglyoxal with glutathione, homoglutathione or gamma-glutamylcysteine, showing no preference for homoglutathione adducts over glutathione adducts. This chain is Lactoylglutathione lyase (GLXI), found in Glycine max (Soybean).